The chain runs to 474 residues: Glutamate--tRNA ligase 1 (474 aa).

Residues Pro-11–Gly-21 carry the 'HIGH' region motif. The 'KMSKS' region motif lies at Lys-240 to Arg-244. Lys-243 is an ATP binding site.

Belongs to the class-I aminoacyl-tRNA synthetase family. Glutamate--tRNA ligase type 1 subfamily. As to quaternary structure, monomer.

Its subcellular location is the cytoplasm. The catalysed reaction is tRNA(Glu) + L-glutamate + ATP = L-glutamyl-tRNA(Glu) + AMP + diphosphate. Catalyzes the attachment of glutamate to tRNA(Glu) in a two-step reaction: glutamate is first activated by ATP to form Glu-AMP and then transferred to the acceptor end of tRNA(Glu). The protein is Glutamate--tRNA ligase 1 of Mesorhizobium japonicum (strain LMG 29417 / CECT 9101 / MAFF 303099) (Mesorhizobium loti (strain MAFF 303099)).